The primary structure comprises 160 residues: MMEKFEKIEMKIPAKAEYVAIIRLTMAGVANRMGFAYDDMEDMKIAISEACTNIVQHAYKEDVGEITIVFGLYEDRLEIMVADNGVSFNFSTLKSKVGPYDINKPVEHLPENGLGLYLINTLMDDIQIMHDEGMTVLMTKYIQREQVENDGNPISTYRSY.

The protein belongs to the anti-sigma-factor family.

It carries out the reaction L-seryl-[protein] + ATP = O-phospho-L-seryl-[protein] + ADP + H(+). It catalyses the reaction L-threonyl-[protein] + ATP = O-phospho-L-threonyl-[protein] + ADP + H(+). Negative regulator of sigma-B activity. Phosphorylates and inactivates its specific antagonist protein, RsbV. Upon phosphorylation of RsbV, RsbW is released and binds to sigma-B, thereby blocking its ability to form an RNA polymerase holoenzyme (E-sigma-B). The sequence is that of Serine-protein kinase RsbW from Bacillus mycoides (strain KBAB4) (Bacillus weihenstephanensis).